Here is a 299-residue protein sequence, read N- to C-terminus: Ent-kaurene oxidase-like protein 1 (299 aa).

A helical transmembrane segment spans residues 16 to 36 (AVVGVFVAAAVVGGFVAAVAL).

This sequence belongs to the cytochrome P450 family. In terms of tissue distribution, expressed in roots and panicles.

The protein localises to the membrane. This Oryza sativa subsp. japonica (Rice) protein is Ent-kaurene oxidase-like protein 1.